Here is a 141-residue protein sequence, read N- to C-terminus: Lysozyme P (141 aa).

The N-terminal stretch at 1–18 (MKAFLVICALTLTAVATQ) is a signal peptide. Residues 20–141 (RTMDRCSLAR…GSLPSINSCF (122 aa)) form the C-type lysozyme domain. 4 disulfide bridges follow: C25-C140, C46-C130, C81-C97, and C93-C111. Residues E51 and D69 contribute to the active site.

This sequence belongs to the glycosyl hydrolase 22 family. In terms of tissue distribution, salivary gland.

The enzyme catalyses Hydrolysis of (1-&gt;4)-beta-linkages between N-acetylmuramic acid and N-acetyl-D-glucosamine residues in a peptidoglycan and between N-acetyl-D-glucosamine residues in chitodextrins.. Unlikely to play an active role in the humoral immune defense. May have a function in the digestion of bacteria in the food. The chain is Lysozyme P (LysP) from Drosophila melanogaster (Fruit fly).